The following is a 75-amino-acid chain: UPF0352 protein VIBHAR_03027 (75 aa).

It belongs to the UPF0352 family.

The polypeptide is UPF0352 protein VIBHAR_03027 (Vibrio campbellii (strain ATCC BAA-1116)).